The primary structure comprises 170 residues: Protein Rex (170 aa).

Residues 1–16 (MPKTRRQRTRRARRNR) show a composition bias toward basic residues. Disordered regions lie at residues 1–27 (MPKTRRQRTRRARRNRPPTPWPISQDL) and 69–170 (VQST…GEKP). The short motif at 2-19 (PKTRRQRTRRARRNRPPT) is the Nuclear localization signal, and RNA-binding (RxRE) element. Residues 57–71 (PPAYIDMPSWPPVQS) are homomultimerization. Low complexity predominate over residues 82–95 (ALSALLSNTLSLAS). Residues 83–94 (LSALLSNTLSLA) carry the Nuclear export signal motif. Residues 124–132 (PSFNQCEST) are homomultimerization. Positions 143–160 (PSGISSPPSPSPNLASVP) are enriched in low complexity. 2 positions are modified to phosphoserine; by host: S151 and S153. Positions 161–170 (KTSTPPGEKP) are enriched in polar residues.

The protein belongs to the deltaretrovirus Rex protein family. As to quaternary structure, homomultimer. Post-translationally, phosphorylation is essential for RNA-binding and function.

It localises to the host nucleus. The protein resides in the host nucleolus. It is found in the host cytoplasm. In terms of biological role, rex escorts unspliced gag-pro-pol and singly spliced env mRNAs out of the nucleus of infected cells. These mRNAs carry a recognition sequence called Rex responsive element (RxRE or XRE) located at the 3' region of the long terminal repeat (LTR). This function is essential since most HTLV proteins are translated from unspliced or partially spliced pre-mRNAs that cannot exit the nucleus by the pathway used by fully processed cellular mRNAs. This is Protein Rex from Human T-cell leukemia virus 2 (HTLV-2).